Here is a 166-residue protein sequence, read N- to C-terminus: Phosphopantetheine adenylyltransferase (166 aa).

Thr14 is a substrate binding site. Residues 14-15 (TF) and His22 each bind ATP. Residues Lys46, Leu78, and Arg92 each coordinate substrate. ATP contacts are provided by residues 93–95 (GLR), Glu103, and 128–134 (WMYLSSS).

Belongs to the bacterial CoaD family. As to quaternary structure, homohexamer. Requires Mg(2+) as cofactor.

Its subcellular location is the cytoplasm. It catalyses the reaction (R)-4'-phosphopantetheine + ATP + H(+) = 3'-dephospho-CoA + diphosphate. It participates in cofactor biosynthesis; coenzyme A biosynthesis; CoA from (R)-pantothenate: step 4/5. In terms of biological role, reversibly transfers an adenylyl group from ATP to 4'-phosphopantetheine, yielding dephospho-CoA (dPCoA) and pyrophosphate. The polypeptide is Phosphopantetheine adenylyltransferase (Maridesulfovibrio salexigens (strain ATCC 14822 / DSM 2638 / NCIMB 8403 / VKM B-1763) (Desulfovibrio salexigens)).